The chain runs to 475 residues: Probable phenylalanine--tRNA ligase alpha subunit (475 aa).

Residues 2–151 (TAVAQKIIEN…KRKLVSRRKK (150 aa)) form a contains the major tRNA-Phe binding sites region. Residues Thr309, 351–353 (QVE), and Tyr391 contribute to the L-phenylalanine site. Glu393 serves as a coordination point for Mg(2+). Residue Phe417 participates in L-phenylalanine binding.

It belongs to the class-II aminoacyl-tRNA synthetase family. Phe-tRNA synthetase alpha subunit type 2 subfamily. In terms of assembly, tetramer of two alpha and two beta subunits. It depends on Mg(2+) as a cofactor.

It localises to the cytoplasm. The catalysed reaction is tRNA(Phe) + L-phenylalanine + ATP = L-phenylalanyl-tRNA(Phe) + AMP + diphosphate + H(+). This is Probable phenylalanine--tRNA ligase alpha subunit from Encephalitozoon cuniculi (strain GB-M1) (Microsporidian parasite).